The sequence spans 241 residues: Pyridoxine 5'-phosphate synthase (241 aa).

Asn-7 is a 3-amino-2-oxopropyl phosphate binding site. 9–10 (DH) contributes to the 1-deoxy-D-xylulose 5-phosphate binding site. Position 18 (Arg-18) interacts with 3-amino-2-oxopropyl phosphate. His-43 (proton acceptor) is an active-site residue. 1-deoxy-D-xylulose 5-phosphate-binding residues include Arg-45 and His-50. The active-site Proton acceptor is the Glu-70. Residue Thr-100 participates in 1-deoxy-D-xylulose 5-phosphate binding. His-191 (proton donor) is an active-site residue. 3-amino-2-oxopropyl phosphate-binding positions include Gly-192 and 213–214 (GH).

The protein belongs to the PNP synthase family. Homooctamer; tetramer of dimers.

It is found in the cytoplasm. It catalyses the reaction 3-amino-2-oxopropyl phosphate + 1-deoxy-D-xylulose 5-phosphate = pyridoxine 5'-phosphate + phosphate + 2 H2O + H(+). Its pathway is cofactor biosynthesis; pyridoxine 5'-phosphate biosynthesis; pyridoxine 5'-phosphate from D-erythrose 4-phosphate: step 5/5. Catalyzes the complicated ring closure reaction between the two acyclic compounds 1-deoxy-D-xylulose-5-phosphate (DXP) and 3-amino-2-oxopropyl phosphate (1-amino-acetone-3-phosphate or AAP) to form pyridoxine 5'-phosphate (PNP) and inorganic phosphate. This chain is Pyridoxine 5'-phosphate synthase, found in Nitrosospira multiformis (strain ATCC 25196 / NCIMB 11849 / C 71).